Consider the following 66-residue polypeptide: Large ribosomal subunit protein bL33c (66 aa).

Belongs to the bacterial ribosomal protein bL33 family.

The protein localises to the plastid. The protein resides in the chloroplast. This chain is Large ribosomal subunit protein bL33c, found in Calycanthus floridus var. glaucus (Eastern sweetshrub).